The primary structure comprises 1721 residues: MSSTSTTSSPEAIKKLLDNMQSDLRGLSMECKKKFPPVKEAAESGIVKVKNIAARSPDVLTALKENSSEVVQPFLMGCGTKEQKITQLCLAAIQRLMSHEVVSEGAAGNIINMLWQLMENGLEELKLLQTVLVLLTTNTVVHDESLSKAIVLCFRLHFTKDNITNNTAAATVRQVVTVVFERMVTEDERHKDAVEQPIPVTGNSNRRSVSTLKPCAKDAYMLFQDLCQLVNADAPYWLVGMTEMTRTFGLELLESVLNDFPQVFLQHQEFSFLLKERVCPLVIKLFSPNIKFRQGSNSNSSPAPVEKPYFPICMRLLRVVSVLIKQFYSLLVTECEIFLSLLVKFLDADKPQWLRAVAVESIHRLCVQPQLLRSFCQSYDMKQHSTKVFRDIVNALGSFIQSLFLIPSAGPASATTNPPGGSSSITPASNPTTSGMATATSNTTVLPAFEYRGTWIPILTISIQGSAKATYLEMLDKVEPPTIPEGYALSVAFHCLLDLVRGITTMIEGEIGQAETDSHISAEETPSHAPTINPQELPAVSDPADKGCRSVWEEMINACWCGLLAALSLLLDASTDETATENILKAEMTMASLCGKLGLVTPRDAFITAICKGSLPPHYALTVLNTSSAAICNKSYSIQGQNVQMISPSSDSHQQVVAVGQPLAVQPQGTVMLTAKNIQCMRTLLNLAHCHGGFLGTSWQLVLATLQHLVWILGLKPSSGGALKPGRAVEGPSTVLTTAVMTDLPIISNILSRLFESSQYLDDVSLHHLINALCSLSLEAMDMAYGNNKEPSLFAVAKLLETGLVNMHRIEILWRPLTGHLIEVCQHPNARMREWGAEALTSLIKAGLDFKHEPQLSENQRLQLLLLNPLKELSNIIHHDIRLKQLECVLQILQSQGDSLGPGWPLVLGVIGAIRNDQGESLIRNAFQCLQLVVTDFLPTMPSTCLQIVVEVAGSFGLQNQELNISLTSIGLLWNISDYFYQRGETIEKELNLEEDLLQKQAKEKGIILNRPFHPAPPFDCLWLCLYAKLGELCVDIRPAVRKSAGQTLFSTIGAHGTLLQHATWHTVIWKVLFQLLNQVRESSTTADKEKIESGGGNILIHHSRDTAEKQWAETWVLTLAGVARIFNTRRYLLQPLGEFTKAWDVLLDHIQSAALSKSNEVSLAALKSFQEILQIVSPTRDNDKPESLPGISAPVPVLIGPVNASGPGRPLVRSDSTGERLSRYSIPEQPIAVDEIEDSALWWAAWNTWYRIGTESTKPPISCDKLTFIPSQPFLTALIQIFPALYQHIKTAFSMDDLQKLGVILHGAVSVPISSDASPFILPSYTEAVLTSLQESVLTALDVLQKEICVGPENMQIMYPAIFDELSAFVQFSCKPPQYGKLETKHIANAKYNQIQLFAPAEWVALNYVPFAEKSLEVMVDLYQKTACHKAVVNEKVLQNVIKTLRVPLSLKYACPSESTWKLAVSSLLKVLSVGLPVARQHVSSGKFDSMWPELASTFEDFLFTKSTPPDNLSIEEFQRNEGIDVEVVQLISMEILPYANFIPKDFVGKIMTMLNKGSIHSQSSSFTEAEIDIRMREEFSKVCFETLLQFSFSNKVTTPQEGYISRMALSVLLKRSQDVLHRYIEDEKLSGKCPLPRQRVTEIIFVLKAVSTLIDSLKKTHPENVDANTWAQVISLYPTLVECITCSSSEVCTALKEALVPFKDFMHPPAAAKVQNGES.

2 disordered regions span residues 414 to 439 and 516 to 539; these read ATTN…MATA and TDSH…ELPA. The segment covering 516-526 has biased composition (basic and acidic residues); it reads TDSHISAEETP.

This sequence belongs to the MON2 family.

Its function is as follows. May be required for traffic between late Golgi and early endosomes. In Xenopus laevis (African clawed frog), this protein is Protein MON2 homolog (mon2).